The primary structure comprises 1218 residues: DNA polymerase subunit gamma-1 (1218 aa).

The segment at 31–50 (LDPVPSDGRPPSQMPSSENG) is disordered. An Exo I motif is present at residues 179–183 (VFDVE). Residue Asp181 is the Exonuclease activity of the active site. Residues 250 to 258 (VGHNVSFDR) carry the Exo II motif. DNA is bound at residue Ser289. The Exo III signature appears at 378–386 (YCARDVWAT). The disordered stretch occupies residues 484–524 (KKVKKPASASKLPIEGAGPFGDPMDQEDPGPPSEEEELQRS). Positions 492 to 553 (ASKLPIEGAG…RPQHLPGHPG (62 aa)) are accessory-interacting determinant. Positions 507 to 520 (MDQEDPGPPSEEEE) are enriched in acidic residues. Arg561 is an RNA binding site. DNA is bound at residue Ser575. 3 residues coordinate RNA: His733, Gly742, and Lys747. Lys785 and Thr828 together coordinate DNA. The tract at residues 837 to 843 (TWLTASN) is trigger loop. 2 residues coordinate RNA: Ser842 and Arg848. The Pol A signature appears at 866 to 875 (VGADVDSQEL). 7 residues coordinate a 2'-deoxyribonucleoside 5'-triphosphate: Asp869, Val870, Ser872, Glu874, Arg922, Lys926, and Tyr930. The Mg(2+) site is built by Asp869 and Val870. A Pol B motif is present at residues 922–937 (REHAKIFNYGRIYGAG). DNA-binding residues include Thr1073 and Ser1074. The Pol C motif lies at 1113–1120 (HDEVRYLV). Residue Asp1114 participates in a 2'-deoxyribonucleoside 5'-triphosphate binding. A Mg(2+)-binding site is contributed by Asp1114.

It belongs to the DNA polymerase type-A family. In terms of assembly, heterotrimer composed of a catalytic subunit and a homodimer of accessory subunits (POLG:POLG2). Interacts with TTC3. Interacts with LIG3. Mg(2+) is required as a cofactor.

Its subcellular location is the mitochondrion. The protein resides in the mitochondrion matrix. It is found in the mitochondrion nucleoid. It carries out the reaction DNA(n) + a 2'-deoxyribonucleoside 5'-triphosphate = DNA(n+1) + diphosphate. The catalysed reaction is a 3'-end 2'-deoxyribonucleotidyl-deoxyribonucleotide-DNA + H2O = a 3'-end 2'-deoxyribonucleotide-DNA + a 2'-deoxyribonucleoside 5'-phosphate + H(+). It catalyses the reaction a 5'-end 2'-deoxyribose-2'-deoxyribonucleotide-DNA = (2E,4S)-4-hydroxypenten-2-al-5-phosphate + a 5'-end 5'-phospho-2'-deoxyribonucleoside-DNA + H(+). With respect to regulation, inhibited by dideoxynucleotides such as antiviral agent zalcitabine. Functionally, catalytic subunit of DNA polymerase gamma solely responsible for replication of mitochondrial DNA (mtDNA). Replicates both heavy and light strands of the circular mtDNA genome using a single-stranded DNA template, RNA primers and the four deoxyribonucleoside triphosphates as substrates. Has 5' -&gt; 3' polymerase activity. Functionally interacts with TWNK and SSBP1 at the replication fork to form a highly processive replisome, where TWNK unwinds the double-stranded DNA template prior to replication and SSBP1 covers the parental heavy strand to enable continuous replication of the entire mitochondrial genome. A single nucleotide incorporation cycle includes binding of the incoming nucleotide at the insertion site, a phosphodiester bond formation reaction that extends the 3'-end of the primer DNA, and translocation of the primer terminus to the post-insertion site. After completing replication of a mtDNA strand, mediates 3' -&gt; 5' exonucleolytic degradation at the nick to enable proper ligation. Highly accurate due to high nucleotide selectivity and 3' -&gt; 5' exonucleolytic proofreading. Proficiently corrects base substitutions, single-base additions and deletions in non-repetitive sequences and short repeats, but displays lower proofreading activity when replicating longer homopolymeric stretches. Exerts exonuclease activity toward single-stranded DNA and double-stranded DNA containing 3'-terminal mispairs. When a misincorporation occurs, transitions from replication to a pro-nucleolytic editing mode and removes the missincorporated nucleoside in the exonuclease active site. Proceeds via an SN2 nucleolytic mechanism in which Asp-198 catalyzes phosphodiester bond hydrolysis and Glu-200 stabilizes the leaving group. As a result the primer strand becomes one nucleotide shorter and is positioned in the post-insertion site, ready to resume DNA synthesis. Exerts 5'-deoxyribose phosphate (dRP) lyase activity and mediates repair-associated mtDNA synthesis (gap filling) in base-excision repair pathway. Catalyzes the release of the 5'-terminal 2-deoxyribose-5-phosphate sugar moiety from incised apurinic/apyrimidinic (AP) sites to produce a substrate for DNA ligase. The dRP lyase reaction does not require divalent metal ions and likely proceeds via a Schiff base intermediate in a beta-elimination reaction mechanism. The protein is DNA polymerase subunit gamma-1 of Mus musculus (Mouse).